A 462-amino-acid polypeptide reads, in one-letter code: Transcript termination protein A18 (462 aa).

In terms of domain architecture, Helicase ATP-binding spans 99 to 255 (KCKEKRPLYT…NSIINFIKFS (157 aa)). Residue 112–119 (LACGFGKT) participates in ATP binding. The DEAH box signature appears at 205–208 (DEAH). Positions 308 to 459 (IVDKIIETFK…ATKLGFREVS (152 aa)) constitute a Helicase C-terminal domain.

Belongs to the helicase family. Poxviruses subfamily. Interacts with G2. Might be part of a transcription complex composed at least of G2, A18, and H5.

The protein resides in the virion. DNA helicase which seems to act as a postreplicative transcription termination factor. Involved in ATP-dependent release of nascent RNA. Forms a stable complex with single-stranded DNA, and to a lesser extent RNA. The chain is Transcript termination protein A18 from Vertebrata (FPV).